The following is a 313-amino-acid chain: tRNA dimethylallyltransferase (313 aa).

Glycine 11–threonine 18 contributes to the ATP binding site. Threonine 13 to threonine 18 is a substrate binding site. Interaction with substrate tRNA regions lie at residues aspartate 36–leucine 39, glutamine 160–arginine 164, and arginine 243–arginine 248.

This sequence belongs to the IPP transferase family. In terms of assembly, monomer. Mg(2+) serves as cofactor.

The enzyme catalyses adenosine(37) in tRNA + dimethylallyl diphosphate = N(6)-dimethylallyladenosine(37) in tRNA + diphosphate. In terms of biological role, catalyzes the transfer of a dimethylallyl group onto the adenine at position 37 in tRNAs that read codons beginning with uridine, leading to the formation of N6-(dimethylallyl)adenosine (i(6)A). The protein is tRNA dimethylallyltransferase of Neisseria meningitidis serogroup C (strain 053442).